Here is a 241-residue protein sequence, read N- to C-terminus: 15,16-dihydrobiliverdin:ferredoxin oxidoreductase (241 aa).

The interval 16–35 is disordered; the sequence is RGGQPAAVPEGLEHCHSSKS.

The protein belongs to the HY2 family.

It carries out the reaction 15,16-dihydrobiliverdin + oxidized 2[4Fe-4S]-[ferredoxin] = biliverdin IXalpha + reduced 2[4Fe-4S]-[ferredoxin] + 2 H(+). Its function is as follows. Catalyzes the two-electron reduction of biliverdin IX-alpha at the C15 methine bridge. The chain is 15,16-dihydrobiliverdin:ferredoxin oxidoreductase from Synechococcus sp. (strain WH7803).